We begin with the raw amino-acid sequence, 128 residues long: Type III secretion protein HrcQb (128 aa).

Over residues 1–21 the composition is skewed to acidic residues; the sequence is MSTEDLYQEDVEMLDDYEDPS. The tract at residues 1–57 is disordered; it reads MSTEDLYQEDVEMLDDYEDPSTEQHWSEEDGEPSGYATAEPDDHAAQEEQDEPPALD. The segment at 50–128 is hrcQb-C; sequence QDEPPALDSL…LQITRLVTRS (79 aa). The dimer-dimer interface stretch occupies residues 78–81; that stretch reads RRLD.

It belongs to the FliN/MopA/SpaO family. As to quaternary structure, homotetramer. The four monomers assemble into two tightly bound homodimers. Interacts with HrcQa.

It localises to the cytoplasm. Its function is as follows. Component of the type III secretion system, which is required for effector protein delivery, parasitism, and pathogenicity. Probably participates in the formation of a C-ring-like assembly along with HrcQa. In Pseudomonas savastanoi pv. phaseolicola (Pseudomonas syringae pv. phaseolicola), this protein is Type III secretion protein HrcQb (hrcQb).